A 484-amino-acid polypeptide reads, in one-letter code: Probable D-lactate dehydrogenase, mitochondrial (484 aa).

A mitochondrion-targeting transit peptide spans 1 to 52 (MAMLLRVATQRLSPWRSFCSRGSQGGLSQDFVEALKAVVGSPHVSTASAVRE). Lys36 carries the post-translational modification N6-acetyllysine. The FAD-binding PCMH-type domain occupies 62–242 (RCQPPDAVVW…TSTTLRLHPA (181 aa)). Residue Lys292 is modified to N6-acetyllysine. Lys335 carries the N6-acetyllysine; alternate modification. An N6-succinyllysine; alternate modification is found at Lys335. 2 positions are modified to N6-acetyllysine: Lys422 and Lys449.

The protein belongs to the FAD-binding oxidoreductase/transferase type 4 family. Interacts with CSRP3. It depends on FAD as a cofactor. In terms of tissue distribution, readily detected in liver and kidney, with a weaker signal observed in heart, skeletal muscle, stomach, brain, and lung.

Its subcellular location is the mitochondrion. The enzyme catalyses (R)-lactate + 2 Fe(III)-[cytochrome c] = 2 Fe(II)-[cytochrome c] + pyruvate + 2 H(+). In terms of biological role, involved in D-lactate, but not L-lactate catabolic process. The sequence is that of Probable D-lactate dehydrogenase, mitochondrial from Mus musculus (Mouse).